The sequence spans 361 residues: Peptide chain release factor 1 (361 aa).

Residue glutamine 237 is modified to N5-methylglutamine. Positions 283–296 are enriched in basic and acidic residues; the sequence is VEDEKRRSEEESTR. Positions 283-305 are disordered; the sequence is VEDEKRRSEEESTRRNLVSSGDR.

The protein belongs to the prokaryotic/mitochondrial release factor family. Post-translationally, methylated by PrmC. Methylation increases the termination efficiency of RF1.

The protein resides in the cytoplasm. Peptide chain release factor 1 directs the termination of translation in response to the peptide chain termination codons UAG and UAA. The protein is Peptide chain release factor 1 of Shewanella woodyi (strain ATCC 51908 / MS32).